Reading from the N-terminus, the 331-residue chain is Ribose-phosphate pyrophosphokinase (331 aa).

Residue 55 to 57 (DGE) participates in ATP binding. Residues His148 and Asp187 each contribute to the Mg(2+) site. The active site involves Lys211. D-ribose 5-phosphate contacts are provided by residues Arg213, Asp237, and 241–245 (DTAGT).

Belongs to the ribose-phosphate pyrophosphokinase family. Class I subfamily. Homohexamer. Mg(2+) serves as cofactor.

It is found in the cytoplasm. It catalyses the reaction D-ribose 5-phosphate + ATP = 5-phospho-alpha-D-ribose 1-diphosphate + AMP + H(+). It participates in metabolic intermediate biosynthesis; 5-phospho-alpha-D-ribose 1-diphosphate biosynthesis; 5-phospho-alpha-D-ribose 1-diphosphate from D-ribose 5-phosphate (route I): step 1/1. In terms of biological role, involved in the biosynthesis of the central metabolite phospho-alpha-D-ribosyl-1-pyrophosphate (PRPP) via the transfer of pyrophosphoryl group from ATP to 1-hydroxyl of ribose-5-phosphate (Rib-5-P). The protein is Ribose-phosphate pyrophosphokinase of Synechococcus elongatus (strain ATCC 33912 / PCC 7942 / FACHB-805) (Anacystis nidulans R2).